The chain runs to 93 residues: METPLEKALTTMVTTFHKYSGREGSKLTLSRKELKELIKTELSLAEKMKESSIDNLMKSLDKNSDQEIDFKEYSVFLTTLCMAYNDFFLEDNK.

EF-hand domains follow at residues Met12 to Lys47 and Met48 to Ala83. Positions 28, 33, 61, 63, 65, 67, and 72 each coordinate Ca(2+).

Belongs to the S-100 family. As to quaternary structure, homodimer.

In terms of biological role, binds calcium, zinc and copper. One subunit can simultaneously bind 2 calcium ions or 2 copper ions plus 1 zinc ion. Calcium and copper ions compete for the same binding sites. The sequence is that of Protein S100-A5 (S100a5) from Mus musculus (Mouse).